Consider the following 216-residue polypeptide: Ribosome maturation factor RimP (216 aa).

Belongs to the RimP family.

The protein localises to the cytoplasm. Functionally, required for maturation of 30S ribosomal subunits. The protein is Ribosome maturation factor RimP of Bartonella quintana (strain Toulouse) (Rochalimaea quintana).